A 207-amino-acid chain; its full sequence is Thiamine-phosphate synthase (207 aa).

Residues Gln-36 to Lys-40 and Asp-68 each bind 4-amino-2-methyl-5-(diphosphooxymethyl)pyrimidine. Mg(2+) contacts are provided by Asp-69 and Asp-88. Ser-106 contributes to the 4-amino-2-methyl-5-(diphosphooxymethyl)pyrimidine binding site. Residue Thr-132–Thr-134 participates in 2-[(2R,5Z)-2-carboxy-4-methylthiazol-5(2H)-ylidene]ethyl phosphate binding. Residue Lys-135 coordinates 4-amino-2-methyl-5-(diphosphooxymethyl)pyrimidine. 2-[(2R,5Z)-2-carboxy-4-methylthiazol-5(2H)-ylidene]ethyl phosphate-binding positions include Gly-162 and Val-182–Ser-183.

Belongs to the thiamine-phosphate synthase family. The cofactor is Mg(2+).

It catalyses the reaction 2-[(2R,5Z)-2-carboxy-4-methylthiazol-5(2H)-ylidene]ethyl phosphate + 4-amino-2-methyl-5-(diphosphooxymethyl)pyrimidine + 2 H(+) = thiamine phosphate + CO2 + diphosphate. The catalysed reaction is 2-(2-carboxy-4-methylthiazol-5-yl)ethyl phosphate + 4-amino-2-methyl-5-(diphosphooxymethyl)pyrimidine + 2 H(+) = thiamine phosphate + CO2 + diphosphate. It carries out the reaction 4-methyl-5-(2-phosphooxyethyl)-thiazole + 4-amino-2-methyl-5-(diphosphooxymethyl)pyrimidine + H(+) = thiamine phosphate + diphosphate. It functions in the pathway cofactor biosynthesis; thiamine diphosphate biosynthesis; thiamine phosphate from 4-amino-2-methyl-5-diphosphomethylpyrimidine and 4-methyl-5-(2-phosphoethyl)-thiazole: step 1/1. Functionally, condenses 4-methyl-5-(beta-hydroxyethyl)thiazole monophosphate (THZ-P) and 2-methyl-4-amino-5-hydroxymethyl pyrimidine pyrophosphate (HMP-PP) to form thiamine monophosphate (TMP). The chain is Thiamine-phosphate synthase from Pyrococcus abyssi (strain GE5 / Orsay).